We begin with the raw amino-acid sequence, 330 residues long: uncharacterized protein (330 aa).

The region spanning 4 to 242 (LSIQNLVVEY…AGEVLFEQST (239 aa)) is the ABC transporter domain. ATP is bound at residue 40-47 (GPSGCGKT). 210-330 (DRVVELTPDF…LIEHRALAND (121 aa)) lines the a nucleoside 3',5'-cyclic phosphate pocket.

Belongs to the ABC transporter superfamily. The complex is composed of two ATP-binding proteins (MT0079), two transmembrane proteins (MT0078) and a solute-binding protein.

Its function is as follows. Probably part of an ABC transporter complex. Probably responsible for energy coupling to the transport system. This is an uncharacterized protein from Mycobacterium tuberculosis (strain CDC 1551 / Oshkosh).